The primary structure comprises 533 residues: tRNA(Ile)-lysidine synthase (533 aa).

Position 21–26 (21–26 (SGGADS)) interacts with ATP. Residues 377-500 (DLLDTAMGEA…DLLSSHWGHV (124 aa)) form the CMP/dCMP-type deaminase domain.

The protein belongs to the tRNA(Ile)-lysidine synthase family.

Its subcellular location is the cytoplasm. It carries out the reaction cytidine(34) in tRNA(Ile2) + L-lysine + ATP = lysidine(34) in tRNA(Ile2) + AMP + diphosphate + H(+). Its function is as follows. Ligates lysine onto the cytidine present at position 34 of the AUA codon-specific tRNA(Ile) that contains the anticodon CAU, in an ATP-dependent manner. Cytidine is converted to lysidine, thus changing the amino acid specificity of the tRNA from methionine to isoleucine. This chain is tRNA(Ile)-lysidine synthase, found in Deinococcus deserti (strain DSM 17065 / CIP 109153 / LMG 22923 / VCD115).